Here is a 181-residue protein sequence, read N- to C-terminus: Large ribosomal subunit protein eL18 (181 aa).

It belongs to the eukaryotic ribosomal protein eL18 family.

Its subcellular location is the cytoplasm. The chain is Large ribosomal subunit protein eL18 (rpl18) from Dictyostelium discoideum (Social amoeba).